We begin with the raw amino-acid sequence, 452 residues long: Probable receptor-like protein kinase At5g20050 (452 aa).

The N-terminal stretch at 1-23 (MEDKKANIIATILILALVVVIIA) is a signal peptide. At 24–33 (ARVSLKLSKT) the chain is on the extracellular side. Residues 34 to 54 (FYLIAGVDISLILAVICFLII) form a helical membrane-spanning segment. Residues 55–452 (RSRYNKERKL…SSIISPISPR (398 aa)) are Cytoplasmic-facing. The region spanning 103–392 (DGFRSLIGKG…MVIEMLEGRV (290 aa)) is the Protein kinase domain. ATP contacts are provided by residues 109 to 117 (IGKGGSGSV) and K131. Residue Y178 is modified to Phosphotyrosine. The Proton acceptor role is filled by D236. T270 and T275 each carry phosphothreonine.

It belongs to the protein kinase superfamily. Ser/Thr protein kinase family.

It is found in the membrane. The catalysed reaction is L-seryl-[protein] + ATP = O-phospho-L-seryl-[protein] + ADP + H(+). It catalyses the reaction L-threonyl-[protein] + ATP = O-phospho-L-threonyl-[protein] + ADP + H(+). This chain is Probable receptor-like protein kinase At5g20050, found in Arabidopsis thaliana (Mouse-ear cress).